The following is a 288-amino-acid chain: 2-methoxy-6-polyprenyl-1,4-benzoquinol methylase, mitochondrial (288 aa).

S-adenosyl-L-methionine contacts are provided by Thr-68, Asp-102, and Ser-146. A compositionally biased stretch (low complexity) spans 260–270; the sequence is PITPTTSSDIP. Residues 260–288 form a disordered region; sequence PITPTTSSDIPAQNTSEATCEVKPEPNSA. Positions 279-288 are enriched in basic and acidic residues; it reads CEVKPEPNSA.

It belongs to the class I-like SAM-binding methyltransferase superfamily. MenG/UbiE family. As to quaternary structure, component of a multi-subunit COQ enzyme complex.

The protein resides in the mitochondrion inner membrane. It catalyses the reaction a 2-methoxy-6-(all-trans-polyprenyl)benzene-1,4-diol + S-adenosyl-L-methionine = a 5-methoxy-2-methyl-3-(all-trans-polyprenyl)benzene-1,4-diol + S-adenosyl-L-homocysteine + H(+). The protein operates within cofactor biosynthesis; ubiquinone biosynthesis. Functionally, methyltransferase required for the conversion of 2-polyprenyl-6-methoxy-1,4-benzoquinol (DDMQH2) to 2-polyprenyl-3-methyl-6-methoxy-1,4-benzoquinol (DMQH2). In Leishmania donovani, this protein is 2-methoxy-6-polyprenyl-1,4-benzoquinol methylase, mitochondrial.